The primary structure comprises 228 residues: 2-C-methyl-D-erythritol 4-phosphate cytidylyltransferase (228 aa).

Belongs to the IspD/TarI cytidylyltransferase family. IspD subfamily.

It catalyses the reaction 2-C-methyl-D-erythritol 4-phosphate + CTP + H(+) = 4-CDP-2-C-methyl-D-erythritol + diphosphate. Its pathway is isoprenoid biosynthesis; isopentenyl diphosphate biosynthesis via DXP pathway; isopentenyl diphosphate from 1-deoxy-D-xylulose 5-phosphate: step 2/6. Catalyzes the formation of 4-diphosphocytidyl-2-C-methyl-D-erythritol from CTP and 2-C-methyl-D-erythritol 4-phosphate (MEP). This is 2-C-methyl-D-erythritol 4-phosphate cytidylyltransferase from Trichormus variabilis (strain ATCC 29413 / PCC 7937) (Anabaena variabilis).